A 1076-amino-acid chain; its full sequence is Serine/threonine-protein phosphatase 6 regulatory ankyrin repeat subunit C (1076 aa).

ANK repeat units lie at residues 7–36 (TDQP…NINV), 40–69 (ERRT…NVNA), 73–102 (LWLT…DVNA), 106–135 (LWQT…SLNV), 139–168 (SGRS…SLNV), 172–201 (KERQ…DLGC), 205–234 (KGYG…EIDE), 238–267 (FGNT…NVNQ), 271–301 (KGFT…DVNY), 305–334 (EGKS…EIDC), 338–367 (FGNT…DTAR), 371–400 (HDMF…LYSI), 422–451 (LGRT…DLRR), 455–484 (FGRT…GVNE), 488–545 (KGCS…DPSL), 549–579 (QGYT…CLED), 584–613 (IPVS…NLDV), 617–646 (KGRT…SALI), 651–680 (RKWT…RADI), 687–716 (YGQT…TADA), 720–749 (RGRT…FVLC), 753–782 (KGRT…STDP), 790–819 (SGYS…FSYL), 822–852 (NPFT…KIVN), 857–886 (KGRT…EVNA), 890–920 (TGRT…DLTV), 924–953 (NKNT…DLGL), and 960–989 (ALQM…TVLA). Over residues 502–514 (YRRAEPHTPSSHD) the composition is skewed to basic and acidic residues. A disordered region spans residues 502–522 (YRRAEPHTPSSHDAEEDEPLK). A phosphoserine mark is found at S1028 and S1075.

Protein phosphatase 6 (PP6) holoenzyme is proposed to be a heterotrimeric complex formed by the catalytic subunit, a SAPS domain-containing subunit (PP6R) and an ankyrin repeat-domain containing regulatory subunit (ARS). Interacts with PPP6R1.

Its function is as follows. Putative regulatory subunit of protein phosphatase 6 (PP6) that may be involved in the recognition of phosphoprotein substrates. The sequence is that of Serine/threonine-protein phosphatase 6 regulatory ankyrin repeat subunit C (ANKRD52) from Homo sapiens (Human).